A 150-amino-acid chain; its full sequence is Large ribosomal subunit protein bL9 (150 aa).

This sequence belongs to the bacterial ribosomal protein bL9 family.

Its function is as follows. Binds to the 23S rRNA. This Corynebacterium jeikeium (strain K411) protein is Large ribosomal subunit protein bL9.